The chain runs to 752 residues: MAAPVVGDADLQSVRRIRLDVSGMSCAACASRVETKLNKIPGVRASVNFATRVATIDAVGMAADELCGVVEKAGYHAAPHTETTVLDKRTKDPDGAHARRLLRRLLVAAVLFVPLADLSTLFAIVPSARVPGWGYILTALAAPVVTWAAWPFHSVALRNARHRTTSMETLISVGIVAATAWSLSSVFGDQPPREGSGIWRAILNSDSIYLEVAAGVTVFVLAGRYFEARAKSKAGSALRALAELGAKNVAVLLPDGAELVIPASELKKRQRFVTRPGETIAADGVVVDGSAAIDMSAMTGEAKPVRAYPAASVVGGTVVMDGRLVIEATAVGADTQFAAMVRLVEQAQTQKARAQRLADHIAGVFVPVVFVIAGLAGAAWLVSGAGADRAFSVTLGVLVIACPCALGLATPTAMMVASGRGAQLGIFIKGYRALETIRSIDTVVFDKTGTLTVGQLAVSTVTMAGSGTSERDREEVLGLAAAVESASEHAMAAAIVAASPDPGPVNGFVAVAGCGVSGEVGGHHVEVGKPSWITRTTPCHDAALVSARLDGESRGETVVFVSVDGVVRAALTIADTLKDSAAAAVAALRSRGLRTILLTGDNRAAADAVAAQVGIDSAVADMLPEGKVDVIQRLREEGHTVAMVGDGINDGPALVGADLGLAIGRGTDVALGAADIILVRDDLNTVPQALDLARATMRTIRMNMIWAFGYNVAAIPIAAAGLLNPLIAGAAMAFSSFFVVSNSLRLRNFGAQ.

Residues 15–78 enclose the HMA domain; that stretch reads RRIRLDVSGM…VVEKAGYHAA (64 aa). 2 residues coordinate a metal cation: cysteine 26 and cysteine 29. Helical transmembrane passes span 105–125, 132–152, 167–187, 201–221, 361–381, and 390–410; these read LLVA…FAIV, GWGY…AWPF, METL…SSVF, AILN…VFVL, IAGV…AAWL, and AFSV…GLAT. Aspartate 446 serves as the catalytic 4-aspartylphosphate intermediate. The chain crosses the membrane as a helical span at residues 714–734; the sequence is AIPIAAAGLLNPLIAGAAMAF.

The protein belongs to the cation transport ATPase (P-type) (TC 3.A.3) family. Type IB subfamily.

The protein resides in the cell membrane. The catalysed reaction is ATP + H2O = ADP + phosphate + H(+). This is Cation-transporting P-type ATPase B (ctpB) from Mycobacterium bovis (strain ATCC BAA-935 / AF2122/97).